The sequence spans 414 residues: 2,3-diketo-5-methylthiopentyl-1-phosphate enolase (414 aa).

Lysine 99 (proton acceptor) is an active-site residue. Substrate is bound by residues lysine 148, 174–177 (KDDE), histidine 265, glycine 338, and 360–361 (GG). Residues lysine 174, aspartate 176, and glutamate 177 each coordinate Mg(2+). At lysine 174 the chain carries N6-carboxylysine.

This sequence belongs to the RuBisCO large chain family. Type IV subfamily. Homodimer. Mg(2+) serves as cofactor.

The catalysed reaction is 5-methylsulfanyl-2,3-dioxopentyl phosphate = 2-hydroxy-5-methylsulfanyl-3-oxopent-1-enyl phosphate. It participates in amino-acid biosynthesis; L-methionine biosynthesis via salvage pathway; L-methionine from S-methyl-5-thio-alpha-D-ribose 1-phosphate: step 3/6. Catalyzes the enolization of 2,3-diketo-5-methylthiopentyl-1-phosphate (DK-MTP-1-P) into 2-hydroxy-3-keto-5-methylthiopentenyl-1-phosphate (HK-MTPenyl-1-P). The protein is 2,3-diketo-5-methylthiopentyl-1-phosphate enolase of Bacillus cereus (strain AH187).